Reading from the N-terminus, the 405-residue chain is Putative aminotransferase AatC (405 aa).

Lys-238 is subject to N6-(pyridoxal phosphate)lysine.

Belongs to the class-I pyridoxal-phosphate-dependent aminotransferase family. In terms of assembly, homodimer. Pyridoxal 5'-phosphate serves as cofactor.

Its subcellular location is the cytoplasm. This chain is Putative aminotransferase AatC (aatC), found in Rhizobium meliloti (strain 1021) (Ensifer meliloti).